We begin with the raw amino-acid sequence, 361 residues long: Cyclic AMP receptor-like protein C (361 aa).

At 1-18 the chain is on the extracellular side; it reads MGIEESQICNPSDREFLS. Residues 19 to 39 form a helical membrane-spanning segment; the sequence is VDILNIVTSSLSLMGSALTII. The Cytoplasmic portion of the chain corresponds to 40–113; the sequence is SYIWKKVRRH…HGTYKQPTSK (74 aa). A helical transmembrane segment spans residues 114 to 134; that stretch reads LPLLIFMLSIADFFTSFFIII. Topologically, residues 135-166 are extracellular; the sequence is SQSYLINNSKSYSTPYSPDLKIHFSPCIILRA. The helical transmembrane segment at 167 to 187 threads the bilayer; it reads IIQFFFLSTFFWTTCISYYLF. Residues 188–197 are Cytoplasmic-facing; sequence HQLSSPGEEK. A helical transmembrane segment spans residues 198–218; that stretch reads YLLAIFNVVSWGIPFAISMVI. At 219–238 the chain is on the extracellular side; that stretch reads TMTNSIVVNSDGWCEVAKPM. Residues 239–259 form a helical membrane-spanning segment; that stretch reads ELSLWFLPLFLCLLVCSIYYF. Topologically, residues 260–292 are cytoplasmic; it reads RLRRLFRSKFEYRLQINDRLKQLDSTISRRLTL. The helical transmembrane segment at 293-313 threads the bilayer; it reads YIVVFVICWLPDVIQHFISFF. The Extracellular portion of the chain corresponds to 314-318; the sequence is SKCTF. The helical transmembrane segment at 319–339 threads the bilayer; it reads FPLLILQNILTPSQGFWNFWI. The Cytoplasmic segment spans residues 340–361; sequence YSYTNKIARFTPSNDENKRLLQ.

It belongs to the G-protein coupled receptor 5 family.

It localises to the membrane. Functionally, receptor for cAMP. The polypeptide is Cyclic AMP receptor-like protein C (crlC) (Dictyostelium discoideum (Social amoeba)).